We begin with the raw amino-acid sequence, 416 residues long: Isobutyryl-CoA dehydrogenase, mitochondrial (416 aa).

Residues 1 to 23 (MMLRGGCQRVGARLRGLRRGPRG) constitute a mitochondrion transit peptide. Position 51 is an N6-acetyllysine; alternate (lysine 51). Residue lysine 51 is modified to N6-succinyllysine; alternate. FAD-binding positions include 159–168 (YCLTEPGSGS) and 192–194 (FIS). Serine 168 is a substrate binding site. Lysine 232 bears the N6-acetyllysine mark. Lysine 272 is modified (N6-succinyllysine). 275–278 (NGGR) is a substrate binding site. FAD is bound by residues arginine 303, 313 to 314 (SQ), and 372 to 376 (QMHGG). Glutamate 399 functions as the Proton acceptor in the catalytic mechanism. Position 401-403 (401-403 (SNE)) interacts with FAD. Substrate is bound at residue arginine 411.

This sequence belongs to the acyl-CoA dehydrogenase family. In terms of assembly, homotetramer, formed by a dimer of dimers. FAD is required as a cofactor.

The protein resides in the mitochondrion. The enzyme catalyses 2-methylpropanoyl-CoA + oxidized [electron-transfer flavoprotein] + H(+) = 2-methylpropenoyl-CoA + reduced [electron-transfer flavoprotein]. The catalysed reaction is (2S)-2-methylbutanoyl-CoA + oxidized [electron-transfer flavoprotein] + H(+) = (2E)-2-methylbut-2-enoyl-CoA + reduced [electron-transfer flavoprotein]. It catalyses the reaction propanoyl-CoA + oxidized [electron-transfer flavoprotein] + H(+) = acryloyl-CoA + reduced [electron-transfer flavoprotein]. The protein operates within amino-acid degradation; L-valine degradation. In terms of biological role, isobutyryl-CoA dehydrogenase which catalyzes the conversion of 2-methylpropanoyl-CoA to (2E)-2-methylpropenoyl-CoA in the valine catabolic pathway. To a lesser extent, also able to catalyze the oxidation of (2S)-2-methylbutanoyl-CoA. The sequence is that of Isobutyryl-CoA dehydrogenase, mitochondrial (ACAD8) from Bos taurus (Bovine).